Reading from the N-terminus, the 107-residue chain is MLITTTPSIEGKQIIEYKEVVFGEVVAGSNFIRDFFAGITDIIGGRSGAYESKIARARKEALEELQQQAKRLGANAVVGVEVNYTSINGEGKSMFMIVASGTAVVVR.

The protein belongs to the UPF0145 family.

The sequence is that of UPF0145 protein PM1668 from Pasteurella multocida (strain Pm70).